A 98-amino-acid polypeptide reads, in one-letter code: NADH-ubiquinone oxidoreductase chain 4L (98 aa).

Transmembrane regions (helical) follow at residues 1–21, 29–49, and 61–81; these read MSIT…GMFT, SLLC…IVSL, and VILL…LVMV.

It belongs to the complex I subunit 4L family. As to quaternary structure, core subunit of respiratory chain NADH dehydrogenase (Complex I) which is composed of 45 different subunits.

It localises to the mitochondrion inner membrane. It carries out the reaction a ubiquinone + NADH + 5 H(+)(in) = a ubiquinol + NAD(+) + 4 H(+)(out). In terms of biological role, core subunit of the mitochondrial membrane respiratory chain NADH dehydrogenase (Complex I) which catalyzes electron transfer from NADH through the respiratory chain, using ubiquinone as an electron acceptor. Part of the enzyme membrane arm which is embedded in the lipid bilayer and involved in proton translocation. The protein is NADH-ubiquinone oxidoreductase chain 4L (MT-ND4L) of Ochotona collaris (Collared pika).